The following is a 235-amino-acid chain: Orotidine 5'-phosphate decarboxylase (235 aa).

Substrate-binding positions include aspartate 10, lysine 32, 59-68 (DLKLHDIPNT), threonine 123, arginine 184, glutamine 193, glycine 213, and arginine 214. Lysine 61 (proton donor) is an active-site residue.

This sequence belongs to the OMP decarboxylase family. Type 1 subfamily. In terms of assembly, homodimer.

It catalyses the reaction orotidine 5'-phosphate + H(+) = UMP + CO2. The protein operates within pyrimidine metabolism; UMP biosynthesis via de novo pathway; UMP from orotate: step 2/2. Catalyzes the decarboxylation of orotidine 5'-monophosphate (OMP) to uridine 5'-monophosphate (UMP). This Paramagnetospirillum magneticum (strain ATCC 700264 / AMB-1) (Magnetospirillum magneticum) protein is Orotidine 5'-phosphate decarboxylase.